A 2111-amino-acid chain; its full sequence is Mycocerosic acid synthase-like polyketide synthase (2111 aa).

An N-terminal signal peptide occupies residues 1–15 (MTQNCVAPVAIIGMA). Cys-16 carries N-palmitoyl cysteine lipidation. The S-diacylglycerol cysteine moiety is linked to residue Cys-16. Residues 16–428 (CRLPGAINSP…GTNVHAVLEQ (413 aa)) enclose the Ketosynthase family 3 (KS3) domain. The Acyl-thioester intermediate; for beta-ketoacyl synthase activity role is filled by Cys-178. Active-site for beta-ketoacyl synthase activity residues include His-313 and His-349. The interval 430 to 537 (PESPAETAAE…MPQQAVTNDD (108 aa)) is linker domain (LD). The interval 538-837 (RGPVWVFSGQ…LAVFAAMRRQ (300 aa)) is acyltransferase (AT). Ser-629 acts as the Acyl-ester intermediate; for acyltransferase activity in catalysis. Positions 896 to 1176 (PSVSVHPLLG…LSAMGLQLGT (281 aa)) are dehydratase (DH). The interval 901–1025 (HPLLGSHVVL…GDVDAERPAA (125 aa)) is N-terminal hotdog fold. One can recognise a PKS/mFAS DH domain in the interval 901–1183 (HPLLGSHVVL…LGTGNSDKAE (283 aa)). His-934 functions as the Proton acceptor; for dehydratase activity in the catalytic mechanism. Residues 1036-1183 (PNRVDGDELR…LGTGNSDKAE (148 aa)) are C-terminal hotdog fold. Asp-1100 functions as the Proton donor; for dehydratase activity in the catalytic mechanism. The segment at 1215-1391 (SWLVILAGDD…SPEDETAWRD (177 aa)) is pseudo beta-ketoacyl reductase (PsiKR). Positions 1419–1743 (EGMRLVVRNP…QHTGKLVIDI (325 aa)) are enoylreductase (ER). Residues 1765–2008 (GAYVITGGLG…RSPFAELFLA (244 aa)) are beta-ketoacyl reductase (KR). NADP(+) is bound by residues 1773-1776 (LGGL), 1796-1799 (SRSA), 1824-1825 (DI), and 1902-1903 (FS). The region spanning 2029-2104 (EEWPTHLRRL…QRLCEMLDTD (76 aa)) is the Carrier domain. Position 2064 is an O-(pantetheine 4'-phosphoryl)serine (Ser-2064).

In terms of assembly, homodimer.

It is found in the cell membrane. The protein operates within lipid metabolism; fatty acid biosynthesis. Polyketide synthase involved in the biosynthesis of 2,4-dimethyl-2-eicosenoic acid, a lipid component of the lipooligosaccharides (LOS) which are not located at the bacterial surface but rather in deeper compartments of the cell envelope of M.smegmatis. The polypeptide is Mycocerosic acid synthase-like polyketide synthase (Mycolicibacterium smegmatis (strain ATCC 700084 / mc(2)155) (Mycobacterium smegmatis)).